The sequence spans 185 residues: Ribosome-recycling factor (185 aa).

The protein belongs to the RRF family.

The protein localises to the cytoplasm. Its function is as follows. Responsible for the release of ribosomes from messenger RNA at the termination of protein biosynthesis. May increase the efficiency of translation by recycling ribosomes from one round of translation to another. This is Ribosome-recycling factor from Helicobacter hepaticus (strain ATCC 51449 / 3B1).